The sequence spans 471 residues: MSFIHDDFLLDTQQAKVLYHEYAKNMPIIDYHCHLPPEQVGQNKQFRNLYEVWLAGDHYKWRAMRSNGVDERYCTGNASDWEKFEKWCETVPYTLRNPLYHWTHLELRKPFGITDRLLDSRSAKRTWDECNELLATPEFSARGLMTQANVKLVCTTDDPIHDLAHHKTVAADKSFKTAMLPTWRPDRAMMVEDAESYNKYLDRLAITADININTFDDLIKALQIRHDYFHENGCRLSDHGLETVYAADYTDSEIKAIFLKIRAHKQLDAVEIEKFQSAMMVEFALQDHAKGWVQQFHIGAIRNNNPRLFRTLGPDTGFDSIGDHNYAKPLAKFLGRLDDQNKLAKTILYNLNPRDNEMIGTMIGNFQDGSAAGKIQFGSGWWFLDQMEGMTRQIEALSQLGLLSRFVGMLTDSRSFLSYSRHEYFRRILCGIFGRDMVKGLVPDDTHMVGKMIQDISFNNAKNYFPFVVPE.

The protein belongs to the metallo-dependent hydrolases superfamily. Uronate isomerase family.

It catalyses the reaction D-glucuronate = D-fructuronate. The enzyme catalyses aldehydo-D-galacturonate = keto-D-tagaturonate. Its pathway is carbohydrate metabolism; pentose and glucuronate interconversion. The polypeptide is Uronate isomerase (Cellvibrio japonicus (strain Ueda107) (Pseudomonas fluorescens subsp. cellulosa)).